We begin with the raw amino-acid sequence, 857 residues long: RNA-directed RNA polymerase 2a (857 aa).

Residues lysine 511 to proline 624 form the RdRp catalytic domain. The disordered stretch occupies residues arginine 782–valine 829. Positions lysine 804–glutamine 816 are enriched in polar residues.

This sequence belongs to the ssRNA positive-strand viruses RNA-directed RNA polymerase family. As to quaternary structure, interacts with replication protein 1a.

The enzyme catalyses RNA(n) + a ribonucleoside 5'-triphosphate = RNA(n+1) + diphosphate. Functionally, RNA-dependent RNA polymerase which replicates the viral genome composed of 3 RNA segments, RNA1, RNA2 and RNA3. The sequence is that of RNA-directed RNA polymerase 2a from Cucumis sativus (Cucumber).